Here is a 683-residue protein sequence, read N- to C-terminus: MSTPAVPQDLQLPPSQRAQSAFKEQRRQKLKEHLLRRKTLFAYKQENEMLSSSRDQRVVTSEDQVQEGTKVLKLKTKMADKENMKRPAESKNNTVVGKHCIPLKPSNELTNSTVVIDTHKPKDSNQTPHLLLTEDDPQSQHMTLSQAFHLKNNSKKKQMTTEKQKQDANMPKKPVLGSYRGQIVQSKINSFRKPLQVKDESSAATKKLSATIPKATKPQPVNTSSVTVKSNRSSNMTATTKFVSTTSQNTQLVRPPIRSHHSNTRDTVKQGISRTSANVTIRKGPHEKELLQSKTALSSVKTSSSQGIIRNKTLSRSIASEVIARPASLSNDKLMEKSEPVDQRRHTAGKAIVDSRSAQPKETSEERKARLSEWKAGKGRVLKRPPNSVVTQHEPAGQNEKPVGSFWTTMAEEDEQRLFTEKVNNTFSECLNLINEGCPKEDILVTLNDLIKNIPDAKKLVKYWICLALIEPITSPIENIIAIYEKAILAGAQPIEEMRHTIVDILTMKSQEKANLGENMEKSCASKEEVKEVSIEDTGVDVDPEKLEMESKLHRNLLFQDCEKEQDNKTKDPTHDVKTPNTETRTSCLIKYNVSTTPYLQSVKKKVQFDGTNSAFKELKFLTPVRRSRRLQEKTSKLPDMLKDHYPCVSSLEQLTELGRETDAFVCRPNAALCRVYYEADTT.

Disordered stretches follow at residues 1 to 28 and 153 to 175; these read MSTP…QRRQ and NSKK…KKPV. Ser178 and Ser190 each carry phosphoserine. Disordered stretches follow at residues 214–236 and 336–403; these read KATK…SSNM and EKSE…EKPV. The span at 219 to 236 shows a compositional bias: polar residues; that stretch reads QPVNTSSVTVKSNRSSNM. 2 stretches are compositionally biased toward basic and acidic residues: residues 336–345 and 362–376; these read EKSEPVDQRR and ETSE…EWKA. Ser534 is modified (phosphoserine). A phosphothreonine mark is found at Thr579 and Thr582. Ser595 carries the post-translational modification Phosphoserine. A phosphothreonine mark is found at Thr596 and Thr597. Tyr599 carries the post-translational modification Phosphotyrosine. Residue Ser602 is modified to Phosphoserine.

It belongs to the CKAP2 family. In terms of assembly, associates with alpha- and beta-tubulins. Abundant in testis, thymus, and in tumor derived cell lines, while barely detectable in liver, prostate, and kidney.

It localises to the cytoplasm. The protein localises to the cytoskeleton. The protein resides in the spindle. It is found in the spindle pole. Its function is as follows. Possesses microtubule stabilizing properties. Involved in regulating aneuploidy, cell cycling, and cell death in a p53/TP53-dependent manner. This chain is Cytoskeleton-associated protein 2, found in Homo sapiens (Human).